A 150-amino-acid polypeptide reads, in one-letter code: SKP1-like protein 17 (150 aa).

The tract at residues 92-150 (LDAADYLIVIGLKNLIAQAIADYTADKTVNEIRELFNIENDYTPEEEEELRKKNEWAFN) is interaction with the F-box domain of F-box proteins.

This sequence belongs to the SKP1 family. Part of a SCF (SKP1-cullin-F-box) protein ligase complex. Interacts with CPR1/CPR30. As to expression, mainly detected in the siliques.

The protein localises to the nucleus. The protein operates within protein modification; protein ubiquitination. Functionally, involved in ubiquitination and subsequent proteasomal degradation of target proteins. Together with CUL1, RBX1 and a F-box protein, it forms a SCF E3 ubiquitin ligase complex. The functional specificity of this complex depends on the type of F-box protein. In the SCF complex, it serves as an adapter that links the F-box protein to CUL1. Probably implicated in incompatibility response after hybridization. The protein is SKP1-like protein 17 (ASK17) of Arabidopsis thaliana (Mouse-ear cress).